We begin with the raw amino-acid sequence, 214 residues long: RNA pyrophosphohydrolase (214 aa).

The Nudix hydrolase domain occupies 6–149 (GFRPNVGIIL…KRDVYQLALT (144 aa)). The Nudix box signature appears at 38 to 59 (GGIKYGETPMQAMYRELHEETG).

Belongs to the Nudix hydrolase family. RppH subfamily. A divalent metal cation is required as a cofactor.

Functionally, accelerates the degradation of transcripts by removing pyrophosphate from the 5'-end of triphosphorylated RNA, leading to a more labile monophosphorylated state that can stimulate subsequent ribonuclease cleavage. This chain is RNA pyrophosphohydrolase, found in Burkholderia cenocepacia (strain HI2424).